Consider the following 382-residue polypeptide: Apolipoprotein A-IV (382 aa).

The N-terminal stretch at 1–20 is a signal peptide; it reads MFLKAVVLTLSLVAVTGAQA. 13 repeat units span residues 33 to 54, 60 to 81, 82 to 103, 115 to 136, 137 to 158, 159 to 180, 181 to 202, 203 to 224, 225 to 246, 247 to 268, 269 to 286, 287 to 308, and 309 to 330. A 13 X 22 AA approximate tandem repeats region spans residues 33 to 330; it reads DYFSQLSNNA…QVEELRQKLG (298 aa).

This sequence belongs to the apolipoprotein A1/A4/E family. In terms of assembly, homodimer. Phosphorylation sites are present in the extracellular medium.

Its subcellular location is the secreted. Functionally, may have a role in chylomicrons and VLDL secretion and catabolism. Required for efficient activation of lipoprotein lipase by ApoC-II; potent activator of LCAT. Apoa-IV is a major component of HDL and chylomicrons. The sequence is that of Apolipoprotein A-IV (APOA4) from Mirounga angustirostris (Northern elephant seal).